A 370-amino-acid chain; its full sequence is Aminomethyltransferase (370 aa).

Belongs to the GcvT family. In terms of assembly, the glycine cleavage system is composed of four proteins: P, T, L and H.

It carries out the reaction N(6)-[(R)-S(8)-aminomethyldihydrolipoyl]-L-lysyl-[protein] + (6S)-5,6,7,8-tetrahydrofolate = N(6)-[(R)-dihydrolipoyl]-L-lysyl-[protein] + (6R)-5,10-methylene-5,6,7,8-tetrahydrofolate + NH4(+). Its function is as follows. The glycine cleavage system catalyzes the degradation of glycine. The polypeptide is Aminomethyltransferase (Stenotrophomonas maltophilia (strain R551-3)).